The chain runs to 118 residues: uncharacterized protein (118 aa).

Residues 25–85 (AEQPGSGGIA…SSSSTPSRAR (61 aa)) are disordered. A compositionally biased stretch (low complexity) spans 71–83 (RPSASSSSSTPSR).

This is an uncharacterized protein from Azospirillum brasilense.